A 591-amino-acid polypeptide reads, in one-letter code: Isocitrate dehydrogenase kinase/phosphatase (591 aa).

ATP is bound by residues 322–328 and lysine 343; that span reads APGIRGL. Aspartate 378 is a catalytic residue.

It belongs to the AceK family.

It is found in the cytoplasm. The catalysed reaction is L-seryl-[isocitrate dehydrogenase] + ATP = O-phospho-L-seryl-[isocitrate dehydrogenase] + ADP + H(+). Functionally, bifunctional enzyme which can phosphorylate or dephosphorylate isocitrate dehydrogenase (IDH) on a specific serine residue. This is a regulatory mechanism which enables bacteria to bypass the Krebs cycle via the glyoxylate shunt in response to the source of carbon. When bacteria are grown on glucose, IDH is fully active and unphosphorylated, but when grown on acetate or ethanol, the activity of IDH declines drastically concomitant with its phosphorylation. The chain is Isocitrate dehydrogenase kinase/phosphatase from Aromatoleum aromaticum (strain DSM 19018 / LMG 30748 / EbN1) (Azoarcus sp. (strain EbN1)).